A 69-amino-acid polypeptide reads, in one-letter code: Large ribosomal subunit protein uL29 (69 aa).

It belongs to the universal ribosomal protein uL29 family.

The polypeptide is Large ribosomal subunit protein uL29 (Oenococcus oeni (strain ATCC BAA-331 / PSU-1)).